The primary structure comprises 115 residues: Large ribosomal subunit protein eL30 (115 aa).

Belongs to the eukaryotic ribosomal protein eL30 family. As to quaternary structure, component of the large ribosomal subunit.

The protein localises to the cytoplasm. Component of the large ribosomal subunit. The ribosome is a large ribonucleoprotein complex responsible for the synthesis of proteins in the cell. This chain is Large ribosomal subunit protein eL30 (RPL30), found in Gallus gallus (Chicken).